Consider the following 590-residue polypeptide: Aspartate--tRNA ligase (590 aa).

Glu-174 contributes to the L-aspartate binding site. The aspartate stretch occupies residues 198–201 (QLMK). L-aspartate is bound at residue Arg-220. ATP-binding positions include 220-222 (RDE) and Gln-229. An L-aspartate-binding site is contributed by His-443. ATP is bound at residue Glu-484. An L-aspartate-binding site is contributed by Arg-491. ATP is bound at residue 536–539 (GLDR).

It belongs to the class-II aminoacyl-tRNA synthetase family. Type 1 subfamily. In terms of assembly, homodimer.

Its subcellular location is the cytoplasm. The catalysed reaction is tRNA(Asp) + L-aspartate + ATP = L-aspartyl-tRNA(Asp) + AMP + diphosphate. Its function is as follows. Catalyzes the attachment of L-aspartate to tRNA(Asp) in a two-step reaction: L-aspartate is first activated by ATP to form Asp-AMP and then transferred to the acceptor end of tRNA(Asp). The sequence is that of Aspartate--tRNA ligase from Lactococcus lactis subsp. cremoris (strain MG1363).